The chain runs to 319 residues: MNTQTRETTSMSDAQDKAATLIEALPWIQRFAGTTMVIKYGGNAMVNDELRRAFAEDIVFLHHVGIHPVVVHGGGPQINSMLGRLGIESEFKGGLRVTTPEAMDVVRMVLTGQVGRELVGLINSHGPYAVGMSGEDGGLLRAVRTGTVVDGEDVDLGLVGEVVGVDPAGIVDILDAGRIPVISTVAPEIVDGGDSVPGAARFQPTGQVLNVNADTAAAAVASALGASKLVILTDVEGLYANWPDKSSLISSLTASELRDMLPRLESGMIPKMAACLKAIDEGVERAHIVDGRLAHSMLLETFTTAGIGTQVVPDEETNA.

Substrate-binding positions include 74-75 (GG), R96, and N210.

The protein belongs to the acetylglutamate kinase family. ArgB subfamily.

The protein localises to the cytoplasm. It catalyses the reaction N-acetyl-L-glutamate + ATP = N-acetyl-L-glutamyl 5-phosphate + ADP. It participates in amino-acid biosynthesis; L-arginine biosynthesis; N(2)-acetyl-L-ornithine from L-glutamate: step 2/4. In terms of biological role, catalyzes the ATP-dependent phosphorylation of N-acetyl-L-glutamate. The protein is Acetylglutamate kinase of Pseudarthrobacter chlorophenolicus (strain ATCC 700700 / DSM 12829 / CIP 107037 / JCM 12360 / KCTC 9906 / NCIMB 13794 / A6) (Arthrobacter chlorophenolicus).